The sequence spans 311 residues: Methionyl-tRNA formyltransferase (311 aa).

Residue 110-113 coordinates (6S)-5,6,7,8-tetrahydrofolate; sequence SLLP.

Belongs to the Fmt family.

The catalysed reaction is L-methionyl-tRNA(fMet) + (6R)-10-formyltetrahydrofolate = N-formyl-L-methionyl-tRNA(fMet) + (6S)-5,6,7,8-tetrahydrofolate + H(+). Functionally, attaches a formyl group to the free amino group of methionyl-tRNA(fMet). The formyl group appears to play a dual role in the initiator identity of N-formylmethionyl-tRNA by promoting its recognition by IF2 and preventing the misappropriation of this tRNA by the elongation apparatus. This is Methionyl-tRNA formyltransferase from Sulfurihydrogenibium sp. (strain YO3AOP1).